A 574-amino-acid polypeptide reads, in one-letter code: Ribonuclease Y (574 aa).

A helical membrane pass occupies residues 1–21; sequence MSLLDLVLLLLVLGLGGVLLL. One can recognise a KH domain in the interval 264-327; sequence AVTVVPIPSD…EIARMALEEL (64 aa). The HD domain maps to 390–483; that stretch reads VLKHSIQVAH…VAAADALSAA (94 aa).

Belongs to the RNase Y family.

Its subcellular location is the cell membrane. Functionally, endoribonuclease that initiates mRNA decay. The chain is Ribonuclease Y from Thermus thermophilus (strain ATCC 27634 / DSM 579 / HB8).